The following is a 263-amino-acid chain: tRNA pseudouridine synthase A (263 aa).

The Nucleophile role is filled by Asp-51. Tyr-106 lines the substrate pocket.

It belongs to the tRNA pseudouridine synthase TruA family.

It catalyses the reaction uridine(38/39/40) in tRNA = pseudouridine(38/39/40) in tRNA. Its function is as follows. Formation of pseudouridine at positions 38, 39 and 40 in the anticodon stem and loop of transfer RNAs. The protein is tRNA pseudouridine synthase A of Pyrococcus abyssi (strain GE5 / Orsay).